Here is a 207-residue protein sequence, read N- to C-terminus: Low-molecular weight cobalt-containing nitrile hydratase subunit alpha (207 aa).

Co(3+)-binding residues include Cys109, Cys112, Ser113, and Cys114.

Belongs to the nitrile hydratase subunit alpha family. In terms of assembly, heterodimer of an alpha and a beta chain. Requires Co(3+) as cofactor.

It catalyses the reaction an aliphatic primary amide = an aliphatic nitrile + H2O. Functionally, NHase catalyzes the hydration of various nitrile compounds to the corresponding amides. The protein is Low-molecular weight cobalt-containing nitrile hydratase subunit alpha of Rhodococcus rhodochrous.